The primary structure comprises 150 residues: Transcriptional repressor NrdR (150 aa).

A zinc finger lies at 3-33 (CPYCTGESAVIDTRELDNGETIRRRRRCKHC). The ATP-cone domain occupies 48-138 (VMVVKKNGDR…VYRSFSDLGK (91 aa)).

It belongs to the NrdR family. Zn(2+) serves as cofactor.

Functionally, negatively regulates transcription of bacterial ribonucleotide reductase nrd genes and operons by binding to NrdR-boxes. This Herpetosiphon aurantiacus (strain ATCC 23779 / DSM 785 / 114-95) protein is Transcriptional repressor NrdR.